Consider the following 547-residue polypeptide: Glucose-6-phosphate isomerase (547 aa).

Glu-354 functions as the Proton donor in the catalytic mechanism. Active-site residues include His-385 and Lys-513.

It belongs to the GPI family.

It is found in the cytoplasm. It carries out the reaction alpha-D-glucose 6-phosphate = beta-D-fructose 6-phosphate. It functions in the pathway carbohydrate biosynthesis; gluconeogenesis. Its pathway is carbohydrate degradation; glycolysis; D-glyceraldehyde 3-phosphate and glycerone phosphate from D-glucose: step 2/4. Functionally, catalyzes the reversible isomerization of glucose-6-phosphate to fructose-6-phosphate. In Erwinia tasmaniensis (strain DSM 17950 / CFBP 7177 / CIP 109463 / NCPPB 4357 / Et1/99), this protein is Glucose-6-phosphate isomerase.